Reading from the N-terminus, the 77-residue chain is DinI-like protein in retron Ec67 (77 aa).

This sequence belongs to the DinI family.

This Escherichia coli protein is DinI-like protein in retron Ec67.